Consider the following 193-residue polypeptide: Ion-translocating oxidoreductase complex subunit A (193 aa).

Transmembrane regions (helical) follow at residues 5–25, 39–59, 62–82, 102–122, 134–154, and 171–191; these read ALLF…FLGL, IGMG…SWLV, FILV…LVLA, LLGI…VVLL, TIYG…FAAI, and SIAL…TGLV.

It belongs to the NqrDE/RnfAE family. In terms of assembly, the complex is composed of six subunits: RnfA, RnfB, RnfC, RnfD, RnfE and RnfG.

The protein localises to the cell inner membrane. Functionally, part of a membrane-bound complex that couples electron transfer with translocation of ions across the membrane. In Pectobacterium carotovorum subsp. carotovorum (strain PC1), this protein is Ion-translocating oxidoreductase complex subunit A.